A 257-amino-acid polypeptide reads, in one-letter code: Tryptophan synthase alpha chain (257 aa).

Active-site proton acceptor residues include glutamate 46 and aspartate 57.

Belongs to the TrpA family. Tetramer of two alpha and two beta chains.

It carries out the reaction (1S,2R)-1-C-(indol-3-yl)glycerol 3-phosphate + L-serine = D-glyceraldehyde 3-phosphate + L-tryptophan + H2O. The protein operates within amino-acid biosynthesis; L-tryptophan biosynthesis; L-tryptophan from chorismate: step 5/5. Functionally, the alpha subunit is responsible for the aldol cleavage of indoleglycerol phosphate to indole and glyceraldehyde 3-phosphate. This Parabacteroides distasonis (strain ATCC 8503 / DSM 20701 / CIP 104284 / JCM 5825 / NCTC 11152) protein is Tryptophan synthase alpha chain.